Here is a 232-residue protein sequence, read N- to C-terminus: RNA chaperone ProQ (232 aa).

Residues 105-182 (EAKARVQAQR…REEQHTPVSD (78 aa)) are disordered. Residues 117–136 (QQAKKREAAATAGEKEDAPR) are compositionally biased toward basic and acidic residues. Residues 137–146 (RERKPRPTTP) show a composition bias toward basic residues. Residues 147–177 (RRKEGAERKPRAQKPVEKAPKTVKAPREEQH) are compositionally biased toward basic and acidic residues.

This sequence belongs to the ProQ family.

The protein resides in the cytoplasm. Its function is as follows. RNA chaperone with significant RNA binding, RNA strand exchange and RNA duplexing activities. May regulate ProP activity through an RNA-based, post-transcriptional mechanism. The sequence is that of RNA chaperone ProQ from Escherichia coli (strain K12).